The chain runs to 604 residues: Testis-expressed protein 13C-1 (604 aa).

4 disordered regions span residues 314-337 (EGEG…SHKD), 374-397 (PVMP…RPKI), 485-523 (CLNA…HPRK), and 538-580 (ATKQ…SANC). A compositionally biased stretch (polar residues) spans 322-333 (QGTSLHGDSSNN). Positions 544-572 (KQPEGIKSLESKQPQETKSSESKQQEKPL) are enriched in basic and acidic residues.

It belongs to the TEX13 family.

In terms of biological role, plays a role in transcriptional repression. This Mus musculus (Mouse) protein is Testis-expressed protein 13C-1.